A 347-amino-acid polypeptide reads, in one-letter code: NADH-ubiquinone oxidoreductase chain 2 (347 aa).

11 helical membrane passes run 2–22 (LSPL…LVTF), 26–46 (SWIL…PLMA), 60–80 (YFIA…LAAW), 94–114 (IILN…PMHF), 127–147 (TGMI…IQIA), 151–171 (NNAF…WGGL), 179–197 (IIAY…MAPF), 201–223 (ITWV…LNTL), 242–262 (MLLL…GFTN), 274–294 (NLVI…FFYT), and 325–345 (LMTM…AIFI).

This sequence belongs to the complex I subunit 2 family.

The protein localises to the mitochondrion inner membrane. The catalysed reaction is a ubiquinone + NADH + 5 H(+)(in) = a ubiquinol + NAD(+) + 4 H(+)(out). Core subunit of the mitochondrial membrane respiratory chain NADH dehydrogenase (Complex I) that is believed to belong to the minimal assembly required for catalysis. Complex I functions in the transfer of electrons from NADH to the respiratory chain. The immediate electron acceptor for the enzyme is believed to be ubiquinone. The protein is NADH-ubiquinone oxidoreductase chain 2 (MT-ND2) of Lampetra fluviatilis (European river lamprey).